We begin with the raw amino-acid sequence, 506 residues long: Cobyric acid synthase (506 aa).

A GATase cobBQ-type domain is found at 254 to 453 (DLDIAVIRLP…IHGIFESDSF (200 aa)). Catalysis depends on C334, which acts as the Nucleophile. The active site involves H445.

This sequence belongs to the CobB/CobQ family. CobQ subfamily.

It functions in the pathway cofactor biosynthesis; adenosylcobalamin biosynthesis. Functionally, catalyzes amidations at positions B, D, E, and G on adenosylcobyrinic A,C-diamide. NH(2) groups are provided by glutamine, and one molecule of ATP is hydrogenolyzed for each amidation. This chain is Cobyric acid synthase, found in Dehalococcoides mccartyi (strain ATCC BAA-2266 / KCTC 15142 / 195) (Dehalococcoides ethenogenes (strain 195)).